The primary structure comprises 225 residues: Ribonuclease 3 (225 aa).

Positions 4–133 (FEKLEKLLGY…LIAAIYLDSN (130 aa)) constitute an RNase III domain. E46 lines the Mg(2+) pocket. D50 is an active-site residue. Mg(2+) is bound by residues N119 and E122. E122 is an active-site residue. Residues 158-225 (DPKTALQEWA…AARKLLHKLK (68 aa)) enclose the DRBM domain.

Belongs to the ribonuclease III family. As to quaternary structure, homodimer. Requires Mg(2+) as cofactor.

The protein localises to the cytoplasm. The enzyme catalyses Endonucleolytic cleavage to 5'-phosphomonoester.. In terms of biological role, digests double-stranded RNA. Involved in the processing of primary rRNA transcript to yield the immediate precursors to the large and small rRNAs (23S and 16S). Processes some mRNAs, and tRNAs when they are encoded in the rRNA operon. Processes pre-crRNA and tracrRNA of type II CRISPR loci if present in the organism. In Rickettsia felis (strain ATCC VR-1525 / URRWXCal2) (Rickettsia azadi), this protein is Ribonuclease 3.